A 57-amino-acid chain; its full sequence is Potassium channel toxin alpha-KTx 17.2 (57 aa).

An N-terminal signal peptide occupies residues 1–26 (MKTIIVLLLLTIVAAAVVESSPKARR). 3 disulfides stabilise this stretch: Cys-30-Cys-46, Cys-36-Cys-51, and Cys-40-Cys-53.

The protein belongs to the short scorpion toxin superfamily. Potassium channel inhibitor family. Alpha-KTx 17 subfamily. As to expression, expressed by the venom gland.

Its subcellular location is the secreted. Its function is as follows. Inhibits voltage-gated potassium channels. This is Potassium channel toxin alpha-KTx 17.2 from Lychas mucronatus (Chinese swimming scorpion).